We begin with the raw amino-acid sequence, 205 residues long: Octanoyltransferase (205 aa).

The region spanning 30 to 205 (NSSDELVWLL…ILKKEFYKIF (176 aa)) is the BPL/LPL catalytic domain. Residues 68–75 (RGGKYTYH), 140–142 (AFG), and 153–155 (GIA) contribute to the substrate site. Residue Cys171 is the Acyl-thioester intermediate of the active site.

Belongs to the LipB family.

The protein resides in the cytoplasm. The catalysed reaction is octanoyl-[ACP] + L-lysyl-[protein] = N(6)-octanoyl-L-lysyl-[protein] + holo-[ACP] + H(+). The protein operates within protein modification; protein lipoylation via endogenous pathway; protein N(6)-(lipoyl)lysine from octanoyl-[acyl-carrier-protein]: step 1/2. Its function is as follows. Catalyzes the transfer of endogenously produced octanoic acid from octanoyl-acyl-carrier-protein onto the lipoyl domains of lipoate-dependent enzymes. Lipoyl-ACP can also act as a substrate although octanoyl-ACP is likely to be the physiological substrate. In Wolbachia sp. subsp. Brugia malayi (strain TRS), this protein is Octanoyltransferase.